The primary structure comprises 324 residues: Olfactory receptor 5A2 (324 aa).

Over 1–26 the chain is Extracellular; it reads MAVGRNNTIVTKFILLGLSDHPQMKI. A glycan (N-linked (GlcNAc...) asparagine) is linked at Asn-6. A helical transmembrane segment spans residues 27 to 47; the sequence is FLFMLFLGLYLLTLAWNLSLI. Residues 48-55 are Cytoplasmic-facing; sequence ALIKMDSH. The chain crosses the membrane as a helical span at residues 56–76; it reads LHMPMYFFLSNLSFLDICYVS. Residues 77 to 100 are Extracellular-facing; that stretch reads STAPKMLSDIITEQKTISFVGCAT. Cysteines 98 and 190 form a disulfide. Residues 101 to 121 traverse the membrane as a helical segment; sequence QYFVFCGMGLTECFLLAAMAY. Over 122 to 134 the chain is Cytoplasmic; that stretch reads DRYAAICNPLLYT. The chain crosses the membrane as a helical span at residues 135-155; it reads VLISHTLCLKMVVGAYVGGFL. The Extracellular portion of the chain corresponds to 156 to 197; sequence SSFIETYSVYQHDFCGPYMINHFFCDLPPVLALSCSDTFTSE. Residues 198–218 form a helical membrane-spanning segment; the sequence is VVTFIVSVVVGIVSVLVVLIS. The Cytoplasmic portion of the chain corresponds to 219–238; sequence YGYIVAAVVKISSATGRTKA. The helical transmembrane segment at 239–259 threads the bilayer; it reads FSTCASHLTAVTLFYGSGFFM. Residues 260–272 are Extracellular-facing; the sequence is YMRPSSSYSLNRD. Residues 273–293 traverse the membrane as a helical segment; that stretch reads KVVSIFYALVIPVVNPIIYSF. Over 294–324 the chain is Cytoplasmic; the sequence is RNKEIKNAMRKAMERDPGISHGGPFIFMTLG.

The protein belongs to the G-protein coupled receptor 1 family.

The protein resides in the cell membrane. Functionally, odorant receptor. The polypeptide is Olfactory receptor 5A2 (OR5A2) (Homo sapiens (Human)).